The primary structure comprises 629 residues: Pentatricopeptide repeat-containing protein At1g63150 (629 aa).

PPR repeat units lie at residues 46–81, 82–116, 117–151, 152–186, 187–221, 222–256, 257–291, 292–326, 327–361, 362–396, 397–431, 432–466, 467–501, 502–532, 534–568, and 569–603; these read ASGDYREILRNRLSDIIKVDDAVDLFGDMVKSRPFP, SIVEFNKLLSAVAKMNKFELVISLGEQMQTLGISH, DLYTYSIFINCFCRRSQLSLALAVLAKMMKLGYEP, DIVTLSSLLNGYCHSKRISDAVALVDQMVEMGYKP, DTFTFTTLIHGLFLHNKASEAVALVDQMVQRGCQP, DLVTYGTVVNGLCKRGDIDLALNLLNKMEAARIKA, NVVIFNTIIDSLCKYRHVEVAVDLFTEMETKGIRP, NVVTYNSLINCLCNYGRWSDASRLLSNMLEKKINP, NVVTFNALIDAFFKEGKLVEAEKLHEEMIQRSIDP, DTITYNLLINGFCMHNRLDEAKQMFKFMVSKDCLP, NIQTYNTLINGFCKCKRVEDGVELFREMSQRGLVG, NTVTYTTIIQGFFQAGDCDSAQMVFKQMVSNRVPT, DIMTYSILLHGLCSYGKLDTALVIFKYLQKSEMEL, NIFIYNTMIEGMCKAGKVGEAWDLFCSLSIK, DVVTYNTMISGLCSKRLLQEADDLFRKMKEDGTLP, and NSGTYNTLIRANLRDCDRAASAELIKEMRSSGFVG.

The protein belongs to the PPR family. P subfamily.

The protein is Pentatricopeptide repeat-containing protein At1g63150 of Arabidopsis thaliana (Mouse-ear cress).